A 244-amino-acid chain; its full sequence is Venom nerve growth factor (244 aa).

An N-terminal signal peptide occupies residues 1 to 18 (MSMLCYTLIIAFLIGIWA). Residues 19-125 (APKSEDNVSL…SLNRNIRAKR (107 aa)) constitute a propeptide that is removed on maturation. 3 cysteine pairs are disulfide-bonded: cysteine 139-cysteine 204, cysteine 182-cysteine 232, and cysteine 192-cysteine 234. Asparagine 148 is a glycosylation site (N-linked (GlcNAc...) asparagine).

This sequence belongs to the NGF-beta family. As to quaternary structure, homodimer; non-covalently linked. N-glycosylated. As to expression, expressed by the venom gland.

It localises to the secreted. Its function is as follows. Nerve growth factor is important for the development and maintenance of the sympathetic and sensory nervous systems. It stimulates division and differentiation of sympathetic and embryonic sensory neurons as well as basal forebrain cholinergic neurons in the brain. Its relevance in the snake venom is not clear. However, it has been shown to inhibit metalloproteinase-dependent proteolysis of platelet glycoprotein Ib alpha, suggesting a metalloproteinase inhibition to prevent metalloprotease autodigestion and/or protection against prey proteases. Binds a lipid between the two protein chains in the homodimer. The lipid-bound form promotes histamine relase from mouse mast cells, contrary to the lipid-free form. It promotes neurite outgrowth in rat PC12 pheochromocytoma cells. The protein is Venom nerve growth factor of Macrovipera lebetinus (Levantine viper).